We begin with the raw amino-acid sequence, 796 residues long: Phenylalanine--tRNA ligase beta subunit (796 aa).

One can recognise a tRNA-binding domain in the interval Ser-39–Ala-149. The 73-residue stretch at Leu-398–Ser-470 folds into the B5 domain. Mg(2+)-binding residues include Asp-448, Asp-454, Glu-457, and Glu-458. The region spanning Pro-703–Arg-795 is the FDX-ACB domain.

The protein belongs to the phenylalanyl-tRNA synthetase beta subunit family. Type 1 subfamily. Tetramer of two alpha and two beta subunits. Mg(2+) serves as cofactor.

The protein resides in the cytoplasm. It carries out the reaction tRNA(Phe) + L-phenylalanine + ATP = L-phenylalanyl-tRNA(Phe) + AMP + diphosphate + H(+). This is Phenylalanine--tRNA ligase beta subunit from Novosphingobium aromaticivorans (strain ATCC 700278 / DSM 12444 / CCUG 56034 / CIP 105152 / NBRC 16084 / F199).